Reading from the N-terminus, the 881-residue chain is MTEKNNSSSIEEKYQERTANLRKTKRISPFWLLPFIALCIGAILFFQIVKERGTSITITFTNGSGIVADKTQIRYQGLQIGIVKEVHFTDNLQKVEVVANINPEASSILRENTKFWLVQPNVSLAGISGLDSLVSGNYITLQPGDGDREDEFIAEEQGPIAQVSAGDLLIHLISDDLGSISIGASVYFKKLPVGKIYDYRINKNNKVEIDVVIDKAYAKFVKKDSRFWNISGINANISPSGLNLNVESLNAVVQGAVSFDSPADSPKADENSHFTLYTNLKAAKRGIEIKVTIPASSALIAGQTEVYSQDNAIGILAKLSAVENNDEILEGSLLIDPNQASLFKANSKIVLRNKKIDLGNLAEPKKFFRGEYFDVIAGDGETKHQFNVIKENELLLNAPNTLVLTLTAPENYGVSEGQNVFYNNMIIGQIVSQTIDVNGVQFKAAIASEYRNLIHENTQFVAATNFDISVGLDGLRFESATPEKWLQGGVRVLTKQGLGKAKDSYPLYQNISNAEHGITGNILTPTITLHTQTLPSIDKGSLVLYRQFEVGKILSIKPKTNNFDVDIYIYPAYQHLLTDKSRFWVESAAKIDVSPKGISIQATPLARSLKGAISFDNGGSGNNRTLYANESYAKSIGFVITLITDDATNLSKGMNLRYLGLDVGQIDSIQLDAKAKRITAKALINPNYMNIIAKEGANFTIISPQISAGGIDNLDSLLQPYIDIEIGNGNTKTQFNLAQTAPQRNKFSNGTPFILETRDAMNLSEGSPILYRGVEVGTVKKFELNSLGDRVLVHIAIMPKYSHLVRQNTEFWIASGYDFSLGWKGAVFNTGSVQQLLKGGISFSTPAEKEIQPQAQPNKRFLLQINRPEEVQTWGSGALSK.

The helical transmembrane segment at 30 to 49 threads the bilayer; it reads FWLLPFIALCIGAILFFQIV.

The protein belongs to the PqiB family.

It localises to the cell inner membrane. The protein is Probable intermembrane transport protein HI_1672 of Haemophilus influenzae (strain ATCC 51907 / DSM 11121 / KW20 / Rd).